Reading from the N-terminus, the 212-residue chain is Acyl-homoserine-lactone synthase (212 aa).

It belongs to the autoinducer synthase family.

The enzyme catalyses a fatty acyl-[ACP] + S-adenosyl-L-methionine = an N-acyl-L-homoserine lactone + S-methyl-5'-thioadenosine + holo-[ACP] + H(+). Its function is as follows. Required for the synthesis of autoinducer molecules which bind to RaiR and that are involved in the restriction of nodule number. This chain is Acyl-homoserine-lactone synthase (raiI), found in Rhizobium etli.